Reading from the N-terminus, the 364-residue chain is MSTVGSTVSSTPSRRFKHRNVNTFLTYSRCPLEPEAVGLHIWSLIAHWTPVYVLSVRETHEDGGYHIHVLAQSAKPVYTTDSGFFDIDGFHPNIQSAKSANKVRAYAMKNPVTYWERGTFIPRKTSFLGDSTEPNSKKQSKDDIVRDIIEHSTNKQEYLSMIQKALPYEWATKLQYFEYSANKLFPDIQEIYTSPFPQSTPALLDPTAINTWLENNLYQQNSNSNRKLSLYILGPTRTGKSSWARSLGRHNYWQNNVDWSSYDEDAEYNIIDDIPFKYCPCWKQLIGCQKDYIVNPKYGKRKKVASKSIPTIVLANEDEDWLRDMTPAQQDYFNANCETYMLEPGERFFSLPAVSATAHPSSEV.

In terms of domain architecture, CRESS-DNA virus Rep endonuclease spans 17 to 120; it reads KHRNVNTFLT…PVTYWERGTF (104 aa). An RCR-1 motif is present at residues 24–27; that stretch reads FLTY. The a divalent metal cation site is built by glutamate 58, histidine 66, and histidine 68. An RCR-2 motif is present at residues 66–68; sequence HIH. The active-site For DNA cleavage activity is tyrosine 106. The RCR-3 signature appears at 106–109; the sequence is YAMK. Asparagine 110 contacts a divalent metal cation. The interval 180 to 192 is oligomerization; it reads SANKLFPDIQEIY. 234–241 is an ATP binding site; the sequence is GPTRTGKS. Residues 257 to 275 form a transactivation region; that stretch reads VDWSSYDEDAEYNIIDDIP. Positions 297–308 match the Nuclear localization signal motif; the sequence is KYGKRKKVASKS.

It belongs to the geminiviridae Rep protein family. In terms of assembly, homooligomer. Rep binds to repeated DNA motifs (iterons). Forms the O-complex, which is a Rep-DNA complex involved in the initiation of RCR. Part of the C- and V-complexes which are RepA-Rep-DNA complexes involved in the c-sense and v-sense transcription. Requires Mg(2+) as cofactor. Mn(2+) is required as a cofactor.

The protein resides in the host nucleus. Its function is as follows. Essential for the replication of viral ssDNA. The closed circular ssDNA genome is first converted to a superhelical dsDNA. Rep binds a specific region at the genome origin of replication. It introduces an endonucleolytic nick within the conserved sequence 5'-TAATATTAC-3' in the intergenic region of the genome present in all geminiviruses, thereby initiating the rolling circle replication (RCR). Following cleavage, binds covalently to the 5'-phosphate of DNA as a tyrosyl ester. The cleavage gives rise to a free 3'-OH that serves as a primer for the cellular DNA polymerase. The polymerase synthesizes the (+) strand DNA by rolling circle mechanism. After one round of replication, a Rep-catalyzed nucleotidyl transfer reaction releases a circular single-stranded virus genome, thereby terminating the replication. Displays origin-specific DNA cleavage, nucleotidyl transferase, ATPase and helicase activities. Acts as an inhibitor of C-sense gene transcription. This chain is Replication-associated protein, found in Sugarcane streak virus (isolate South Africa) (SSV).